The sequence spans 273 residues: Large ribosomal subunit protein uL2 (273 aa).

Disordered regions lie at residues 28 to 54 (KPYA…TRHI) and 221 to 273 (RGTA…RRTK). Positions 39-48 (KSGGRNNNGR) are enriched in low complexity.

This sequence belongs to the universal ribosomal protein uL2 family. Part of the 50S ribosomal subunit. Forms a bridge to the 30S subunit in the 70S ribosome.

In terms of biological role, one of the primary rRNA binding proteins. Required for association of the 30S and 50S subunits to form the 70S ribosome, for tRNA binding and peptide bond formation. It has been suggested to have peptidyltransferase activity; this is somewhat controversial. Makes several contacts with the 16S rRNA in the 70S ribosome. The sequence is that of Large ribosomal subunit protein uL2 from Pectobacterium carotovorum subsp. carotovorum (strain PC1).